The chain runs to 662 residues: Glutathione hydrolase 7 (662 aa).

The Cytoplasmic segment spans residues 1–106 (MAAENEASQE…AAECSCRQDG (106 aa)). Phosphoserine is present on residues Ser17, Ser72, Ser79, and Ser83. The segment at 26–90 (SFPRLPEDEP…DGSPLRETRK (65 aa)) is disordered. Residues 72-83 (SSSSEMGSQDGS) show a composition bias toward low complexity. Residues 107–127 (LTVIVTACLTFATGVTVALVM) traverse the membrane as a helical; Signal-anchor for type II membrane protein segment. The Extracellular portion of the chain corresponds to 128–662 (QIYFGDPQIF…SLDATGASIL (535 aa)). N-linked (GlcNAc...) asparagine glycans are attached at residues Asn198, Asn267, Asn283, Asn330, Asn353, Asn394, Asn519, Asn523, and Asn586.

Belongs to the gamma-glutamyltransferase family. Heterodimer composed of the light and heavy chains. The active site is located in the light chain. Cleaved by autocatalysis into a large and a small subunit and the autocatalytic cleavage is essential to the functional activation of the enzyme.

It is found in the membrane. It catalyses the reaction an N-terminal (5-L-glutamyl)-[peptide] + an alpha-amino acid = 5-L-glutamyl amino acid + an N-terminal L-alpha-aminoacyl-[peptide]. It carries out the reaction glutathione + H2O = L-cysteinylglycine + L-glutamate. The catalysed reaction is an S-substituted glutathione + H2O = an S-substituted L-cysteinylglycine + L-glutamate. It participates in sulfur metabolism; glutathione metabolism. Hydrolyzes and transfers gamma-glutamyl moieties from glutathione and other gamma-glutamyl compounds to acceptors. In Rattus norvegicus (Rat), this protein is Glutathione hydrolase 7.